Reading from the N-terminus, the 146-residue chain is Ribonuclease H (146 aa).

Residues 1 to 143 (MKKQVTIYTD…CDQLAREAIK (143 aa)) form the RNase H type-1 domain. Positions 10, 48, 70, and 135 each coordinate Mg(2+).

The protein belongs to the RNase H family. As to quaternary structure, monomer. It depends on Mg(2+) as a cofactor.

It localises to the cytoplasm. The enzyme catalyses Endonucleolytic cleavage to 5'-phosphomonoester.. In terms of biological role, endonuclease that specifically degrades the RNA of RNA-DNA hybrids. This is Ribonuclease H from Chlorobium chlorochromatii (strain CaD3).